The following is a 366-amino-acid chain: Chorismate synthase (366 aa).

NADP(+) is bound by residues arginine 48 and arginine 54. Residues 125 to 127 (RSS), 238 to 239 (NA), glycine 278, 293 to 297 (KPTSS), and arginine 319 contribute to the FMN site.

The protein belongs to the chorismate synthase family. Homotetramer. It depends on FMNH2 as a cofactor.

It catalyses the reaction 5-O-(1-carboxyvinyl)-3-phosphoshikimate = chorismate + phosphate. Its pathway is metabolic intermediate biosynthesis; chorismate biosynthesis; chorismate from D-erythrose 4-phosphate and phosphoenolpyruvate: step 7/7. In terms of biological role, catalyzes the anti-1,4-elimination of the C-3 phosphate and the C-6 proR hydrogen from 5-enolpyruvylshikimate-3-phosphate (EPSP) to yield chorismate, which is the branch point compound that serves as the starting substrate for the three terminal pathways of aromatic amino acid biosynthesis. This reaction introduces a second double bond into the aromatic ring system. The chain is Chorismate synthase from Burkholderia vietnamiensis (strain G4 / LMG 22486) (Burkholderia cepacia (strain R1808)).